Here is a 977-residue protein sequence, read N- to C-terminus: Ubiquitin-like modifier-activating enzyme 7 (977 aa).

Belongs to the ubiquitin-activating E1 family. In terms of processing, ubiquitinated by RNF170.

The protein resides in the cytoplasm. The protein localises to the nucleus. Its pathway is protein modification; protein ubiquitination. E1-activating enzyme that catalyzes the covalent conjugation of the ubiquitin-like protein product of ISG15 to additional interferons stimulated proteins (ISGs) as well as other cellular proteins such as P53 in a process termed protein ISGylation. Plays an essential role in antiviral immunity together with ISG15 by restricting the replication of many viruses including rabies virus, influenza virus, sindbis virus or rotavirus. The sequence is that of Ubiquitin-like modifier-activating enzyme 7 from Mus musculus (Mouse).